The primary structure comprises 617 residues: Serine/threonine-protein kinase par-4 (617 aa).

Over residues 1–11 the composition is skewed to polar residues; it reads MDAPSTSSGAQ. A disordered region spans residues 1–59; that stretch reads MDAPSTSSGAQSKLLMPGDDEADEDHQNRGDPNLQQKQKIQLNVDPDYDDDEDDDCFID. The segment covering 46-57 has biased composition (acidic residues); that stretch reads PDYDDDEDDDCF. In terms of domain architecture, Protein kinase spans 183-446; that stretch reads YMWGGQIGTG…CLETMIHPWF (264 aa). Residues 189–197 and Lys-212 each bind ATP; that span reads IGTGSYGKV. The active-site Proton acceptor is Asp-310. The interval 523–617 is disordered; the sequence is LEAKPGDGPD…CIFRSRTDSA (95 aa). The segment covering 587–597 has biased composition (pro residues); that stretch reads DPPPTAAPGAP.

The protein belongs to the protein kinase superfamily. CAMK Ser/Thr protein kinase family. LKB1 subfamily. Interacts with strd-1. The cofactor is Mg(2+). Mn(2+) is required as a cofactor. In terms of tissue distribution, expressed in the gonads, oocytes and early embryos (at protein level).

Its subcellular location is the cytoplasm. The protein resides in the cell cortex. It carries out the reaction L-seryl-[protein] + ATP = O-phospho-L-seryl-[protein] + ADP + H(+). The enzyme catalyses L-threonyl-[protein] + ATP = O-phospho-L-threonyl-[protein] + ADP + H(+). In terms of biological role, required for cytoplasmic partitioning and asymmetric cell division in early embryogenesis. Controls the asymmetric cell division of the Q.p neuroblast lineage. Involved in mediating cell polarization via regulation of anillin family scaffold proteins. Phosphorylates and restricts the asymmetry effectors mex-5 and mex-6 to the anterior cytoplasm of the zygote and maintains these phosphorylations until fertilization. May phosphorylate par-1. Required for strd-1 localization to the cell cortex of early embryos and may be required for strd-1 protein stabilization. May regulate the integrity of the early embryonic cortex in a strd-1-dependent manner. Phosphorylates and regulates aak-2 in response to oxidative stress and during dauer development. May also play a role in motility, behavioral response, regulation of lifespan and dauer formation through this pathway. Required to establish germline stem cell (GSC) quiescence during dauer development. Acts downstream of unc-40 in dendrite outgrowth. May play a role in cell shedding during embryogenesis, probably by phosphorylating pig-1. The sequence is that of Serine/threonine-protein kinase par-4 (par-4) from Caenorhabditis elegans.